A 426-amino-acid polypeptide reads, in one-letter code: S-adenosylmethionine synthase (426 aa).

H22 provides a ligand contact to ATP. D24 lines the Mg(2+) pocket. A K(+)-binding site is contributed by E50. The L-methionine site is built by E63 and Q106. The tract at residues 106–116 is flexible loop; the sequence is QSPDISQGVTA. ATP contacts are provided by residues 181–183, 257–258, D266, 272–273, A289, and K293; these read DGK, KF, and RK. D266 contributes to the L-methionine binding site. An L-methionine-binding site is contributed by K297.

Belongs to the AdoMet synthase family. Homotetramer; dimer of dimers. Mg(2+) is required as a cofactor. K(+) serves as cofactor.

It is found in the cytoplasm. The catalysed reaction is L-methionine + ATP + H2O = S-adenosyl-L-methionine + phosphate + diphosphate. It functions in the pathway amino-acid biosynthesis; S-adenosyl-L-methionine biosynthesis; S-adenosyl-L-methionine from L-methionine: step 1/1. In terms of biological role, catalyzes the formation of S-adenosylmethionine (AdoMet) from methionine and ATP. The overall synthetic reaction is composed of two sequential steps, AdoMet formation and the subsequent tripolyphosphate hydrolysis which occurs prior to release of AdoMet from the enzyme. The chain is S-adenosylmethionine synthase from Synechocystis sp. (strain ATCC 27184 / PCC 6803 / Kazusa).